The chain runs to 80 residues: Acyl carrier protein (80 aa).

The Carrier domain occupies 4-79 (EAILEKVRSI…DAVKYIEDKQ (76 aa)). Ser-39 is modified (O-(pantetheine 4'-phosphoryl)serine).

This sequence belongs to the acyl carrier protein (ACP) family. 4'-phosphopantetheine is transferred from CoA to a specific serine of apo-ACP by AcpS. This modification is essential for activity because fatty acids are bound in thioester linkage to the sulfhydryl of the prosthetic group.

It is found in the cytoplasm. Its pathway is lipid metabolism; fatty acid biosynthesis. Its function is as follows. Carrier of the growing fatty acid chain in fatty acid biosynthesis. The polypeptide is Acyl carrier protein (Parasynechococcus marenigrum (strain WH8102)).